Here is a 364-residue protein sequence, read N- to C-terminus: Aminomethyltransferase (364 aa).

This sequence belongs to the GcvT family. As to quaternary structure, the glycine cleavage system is composed of four proteins: P, T, L and H.

The catalysed reaction is N(6)-[(R)-S(8)-aminomethyldihydrolipoyl]-L-lysyl-[protein] + (6S)-5,6,7,8-tetrahydrofolate = N(6)-[(R)-dihydrolipoyl]-L-lysyl-[protein] + (6R)-5,10-methylene-5,6,7,8-tetrahydrofolate + NH4(+). Functionally, the glycine cleavage system catalyzes the degradation of glycine. The polypeptide is Aminomethyltransferase (Geobacillus sp. (strain WCH70)).